We begin with the raw amino-acid sequence, 319 residues long: Acetyl-coenzyme A carboxylase carboxyl transferase subunit alpha (319 aa).

The region spanning 32-293 (NVETEVRALR…KAVLLNELDA (262 aa)) is the CoA carboxyltransferase C-terminal domain.

This sequence belongs to the AccA family. In terms of assembly, acetyl-CoA carboxylase is a heterohexamer composed of biotin carboxyl carrier protein (AccB), biotin carboxylase (AccC) and two subunits each of ACCase subunit alpha (AccA) and ACCase subunit beta (AccD).

Its subcellular location is the cytoplasm. The enzyme catalyses N(6)-carboxybiotinyl-L-lysyl-[protein] + acetyl-CoA = N(6)-biotinyl-L-lysyl-[protein] + malonyl-CoA. It participates in lipid metabolism; malonyl-CoA biosynthesis; malonyl-CoA from acetyl-CoA: step 1/1. Component of the acetyl coenzyme A carboxylase (ACC) complex. First, biotin carboxylase catalyzes the carboxylation of biotin on its carrier protein (BCCP) and then the CO(2) group is transferred by the carboxyltransferase to acetyl-CoA to form malonyl-CoA. This Xanthomonas axonopodis pv. citri (strain 306) protein is Acetyl-coenzyme A carboxylase carboxyl transferase subunit alpha.